Here is a 209-residue protein sequence, read N- to C-terminus: Uracil phosphoribosyltransferase (209 aa).

5-phospho-alpha-D-ribose 1-diphosphate contacts are provided by residues Arg-79, Arg-104, and 131–139; that span reads DPMLATGAS. Uracil-binding positions include Ile-194 and 199–201; that span reads GDA. Residue Asp-200 participates in 5-phospho-alpha-D-ribose 1-diphosphate binding.

Belongs to the UPRTase family. It depends on Mg(2+) as a cofactor.

The enzyme catalyses UMP + diphosphate = 5-phospho-alpha-D-ribose 1-diphosphate + uracil. It participates in pyrimidine metabolism; UMP biosynthesis via salvage pathway; UMP from uracil: step 1/1. With respect to regulation, allosterically activated by GTP. In terms of biological role, catalyzes the conversion of uracil and 5-phospho-alpha-D-ribose 1-diphosphate (PRPP) to UMP and diphosphate. The polypeptide is Uracil phosphoribosyltransferase (Staphylococcus aureus (strain JH1)).